Reading from the N-terminus, the 159-residue chain is Protein C2 (159 aa).

Residues 43–60 (KKRPPKLTWAPKKKRRKA) carry the Nuclear localization signal motif. A zinc finger lies at 65 to 81 (CGCSYYGGIDCEDGFTH). Residues 102–139 (PNLLPPPEHNNNGDGEQNNNITNQSQPQPAESVGSPDL) form a disordered region. Over residues 110-124 (HNNNGDGEQNNNITN) the composition is skewed to low complexity.

The protein belongs to the geminiviridae transcriptional activator protein family. In terms of assembly, monomer. Suppress local silencing by interacting with and inactivating host adenosine kinase 2 (ADK2) in the cytoplasm. Interacts with and inhibits host SNF1 kinase.

It localises to the host cytoplasm. Its function is as follows. Acts as a suppressor of RNA-mediated gene silencing, also known as post-transcriptional gene silencing (PTGS), a mechanism of plant viral defense that limits the accumulation of viral RNAs. Suppresses the host RNA silencing by inhibiting adenosine kinase 2 (ADK2), a kinase involved in a general methylation pathway. Also suppresses the host basal defense by interacting with and inhibiting SNF1 kinase, a key regulator of cell metabolism implicated in innate antiviral defense. Determines pathogenicity. This is Protein C2 from Tomato pseudo-curly top virus (TPCTV).